A 402-amino-acid polypeptide reads, in one-letter code: NAD-dependent protein deacetylase sirtuin-7 (402 aa).

2 disordered regions span residues 1-25 and 59-78; these read MAAG…REEQ and VTEL…RQEE. Over residues 9–25 the composition is skewed to basic and acidic residues; that stretch reads RSERKAAERVRRLREEQ. The 248-residue stretch at 83 to 330 folds into the Deacetylase sirtuin-type domain; sequence PEELRRKVRE…RLLMDELGLE (248 aa). Residues 108–127 and 168–171 contribute to the NAD(+) site; these read GAGI…NGVW and QNCD. The active-site Proton acceptor is histidine 188. Zn(2+) contacts are provided by cysteine 196, cysteine 199, cysteine 226, and cysteine 229. Residues 269-271, 298-300, and cysteine 316 each bind NAD(+); these read GSS and NLQ. Positions 355-385 are disordered; that stretch reads SHSRKSLCRSREEPPPGDQSAPLASATPILG. An Asymmetric dimethylarginine; alternate modification is found at arginine 390. Position 390 is an omega-N-methylarginine; alternate (arginine 390).

Belongs to the sirtuin family. Class IV subfamily. As to quaternary structure, interacts with UBTF and the RNA polymerase I complex. Interacts with components of the B-WICH complex, such as MYBBP1A, SMARCA5/SNF2H and BAZ1B/WSTF. Interacts with ELK4, leading to stabilization at target promoters for H3K18Ac deacetylation. Interacts with histone H2A and/or histone H2B. Interacts with DNMT1. Interacts with SIRT1. It depends on Zn(2+) as a cofactor. In terms of processing, phosphorylated during mitosis. Methylation at Arg-390 by PRMT6 inhibits the H3K18Ac histone deacetylase activity, promoting mitochondria biogenesis and maintaining mitochondria respiration. Post-translationally, ubiquitinated via 'Lys-63'-linked ubiquitin chains. Deubiquitinated by USP7, inhibiting the H3K18Ac histone deacetylase activity and regulating gluconeogenesis. Ubiquitinated by E3 ubiquitin-protein ligase complex containing FBXO7; leading to proteasomal degradation.

Its subcellular location is the nucleus. It is found in the nucleolus. It localises to the nucleoplasm. The protein resides in the chromosome. The protein localises to the cytoplasm. It carries out the reaction N(6)-acetyl-L-lysyl-[protein] + NAD(+) + H2O = 2''-O-acetyl-ADP-D-ribose + nicotinamide + L-lysyl-[protein]. The catalysed reaction is N(6)-glutaryl-L-lysyl-[protein] + NAD(+) + H2O = 2''-O-glutaryl-ADP-D-ribose + nicotinamide + L-lysyl-[protein]. The enzyme catalyses N(6)-succinyl-L-lysyl-[protein] + NAD(+) + H2O = 2''-O-succinyl-ADP-D-ribose + nicotinamide + L-lysyl-[protein]. It catalyses the reaction N(6)-propanoyl-L-lysyl-[protein] + NAD(+) + H2O = 3''-O-propanoyl-ADP-D-ribose + nicotinamide + L-lysyl-[protein]. It carries out the reaction N(6)-decanoyl-L-lysyl-[protein] + NAD(+) + H2O = 2''-O-decanoyl-ADP-D-ribose + nicotinamide + L-lysyl-[protein]. With respect to regulation, NAD-dependent protein-lysine deacetylase and deacylase activities are activated by nucleic acids. Histone deacetylase activity is activated by DNA. Protein-lysine deacylase activity is activated by RNA. H3K18Ac histone deacetylase activity is inhibited by methylation at Arg-390. H3K18Ac histone deacetylase activity is inhibited by deubiquitination by USP7. Its function is as follows. NAD-dependent protein-lysine deacylase that can act both as a deacetylase or deacylase (desuccinylase, depropionylase, deglutarylase and dedecanoylase), depending on the context. Specifically mediates deacetylation of histone H3 at 'Lys-18' (H3K18Ac). In contrast to other histone deacetylases, displays strong preference for a specific histone mark, H3K18Ac, directly linked to control of gene expression. H3K18Ac is mainly present around the transcription start site of genes and has been linked to activation of nuclear hormone receptors; SIRT7 thereby acts as a transcription repressor. Moreover, H3K18 hypoacetylation has been reported as a marker of malignancy in various cancers and seems to maintain the transformed phenotype of cancer cells. Also able to mediate deacetylation of histone H3 at 'Lys-36' (H3K36Ac) in the context of nucleosomes. Also mediates deacetylation of non-histone proteins, such as ATM, CDK9, DDX21, DDB1, FBL, FKBP5/FKBP51, GABPB1, RAN, RRP9/U3-55K and POLR1E/PAF53. Enriched in nucleolus where it stimulates transcription activity of the RNA polymerase I complex. Acts by mediating the deacetylation of the RNA polymerase I subunit POLR1E/PAF53, thereby promoting the association of RNA polymerase I with the rDNA promoter region and coding region. In response to metabolic stress, SIRT7 is released from nucleoli leading to hyperacetylation of POLR1E/PAF53 and decreased RNA polymerase I transcription. Required to restore the transcription of ribosomal RNA (rRNA) at the exit from mitosis. Promotes pre-ribosomal RNA (pre-rRNA) cleavage at the 5'-terminal processing site by mediating deacetylation of RRP9/U3-55K, a core subunit of the U3 snoRNP complex. Mediates 'Lys-37' deacetylation of Ran, thereby regulating the nuclear export of NF-kappa-B subunit RELA/p65. Acts as a regulator of DNA damage repair by mediating deacetylation of ATM during the late stages of DNA damage response, promoting ATM dephosphorylation and deactivation. Suppresses the activity of the DCX (DDB1-CUL4-X-box) E3 ubiquitin-protein ligase complexes by mediating deacetylation of DDB1, which prevents the interaction between DDB1 and CUL4 (CUL4A or CUL4B). Activates RNA polymerase II transcription by mediating deacetylation of CDK9, thereby promoting 'Ser-2' phosphorylation of the C-terminal domain (CTD) of RNA polymerase II. Deacetylates FBL, promoting histone-glutamine methyltransferase activity of FBL. Acts as a regulator of mitochondrial function by catalyzing deacetylation of GABPB1. Regulates Akt/AKT1 activity by mediating deacetylation of FKBP5/FKBP51. Required to prevent R-loop-associated DNA damage and transcription-associated genomic instability by mediating deacetylation and subsequent activation of DDX21, thereby overcoming R-loop-mediated stalling of RNA polymerases. In addition to protein deacetylase activity, also acts as a protein-lysine deacylase. Acts as a protein depropionylase by mediating depropionylation of Osterix (SP7), thereby regulating bone formation by osteoblasts. Acts as a histone deglutarylase by mediating deglutarylation of histone H4 on 'Lys-91' (H4K91glu); a mark that destabilizes nucleosomes by promoting dissociation of the H2A-H2B dimers from nucleosomes. Acts as a histone desuccinylase: in response to DNA damage, recruited to DNA double-strand breaks (DSBs) and catalyzes desuccinylation of histone H3 on 'Lys-122' (H3K122succ), thereby promoting chromatin condensation and DSB repair. Also promotes DSB repair by promoting H3K18Ac deacetylation, regulating non-homologous end joining (NHEJ). Along with its role in DNA repair, required for chromosome synapsis during prophase I of female meiosis by catalyzing H3K18Ac deacetylation. Involved in transcriptional repression of LINE-1 retrotransposon via H3K18Ac deacetylation, and promotes their association with the nuclear lamina. Required to stabilize ribosomal DNA (rDNA) heterochromatin and prevent cellular senescence induced by rDNA instability. Acts as a negative regulator of SIRT1 by preventing autodeacetylation of SIRT1, restricting SIRT1 deacetylase activity. The protein is NAD-dependent protein deacetylase sirtuin-7 of Rattus norvegicus (Rat).